Reading from the N-terminus, the 187-residue chain is Pterin-4-alpha-carbinolamine dehydratase 2, mitochondrial (187 aa).

The N-terminal 33 residues, Met1 to Phe33, are a transit peptide targeting the mitochondrion.

The protein belongs to the pterin-4-alpha-carbinolamine dehydratase family.

It is found in the mitochondrion. It carries out the reaction (4aS,6R)-4a-hydroxy-L-erythro-5,6,7,8-tetrahydrobiopterin = (6R)-L-erythro-6,7-dihydrobiopterin + H2O. Its function is as follows. Involved in tetrahydrobiopterin biosynthesis. Possesses pterin-4-alpha-carbinolamine dehydratase activity when expressed in a bacterial heterolgous system. This is Pterin-4-alpha-carbinolamine dehydratase 2, mitochondrial from Arabidopsis thaliana (Mouse-ear cress).